The following is a 207-amino-acid chain: Large ribosomal subunit protein uL4 (207 aa).

A disordered region spans residues 48-89; the sequence is SHKVKNRSEVRGGGRKPWRQKGTGRARQGSIRSPQWRGGGVV. Basic residues predominate over residues 60–71; the sequence is GGRKPWRQKGTG.

The protein belongs to the universal ribosomal protein uL4 family. As to quaternary structure, part of the 50S ribosomal subunit.

Its function is as follows. One of the primary rRNA binding proteins, this protein initially binds near the 5'-end of the 23S rRNA. It is important during the early stages of 50S assembly. It makes multiple contacts with different domains of the 23S rRNA in the assembled 50S subunit and ribosome. Functionally, forms part of the polypeptide exit tunnel. The protein is Large ribosomal subunit protein uL4 of Bacillus velezensis (strain DSM 23117 / BGSC 10A6 / LMG 26770 / FZB42) (Bacillus amyloliquefaciens subsp. plantarum).